Consider the following 436-residue polypeptide: Glutamate-1-semialdehyde 2,1-aminomutase (436 aa).

N6-(pyridoxal phosphate)lysine is present on lysine 276.

It belongs to the class-III pyridoxal-phosphate-dependent aminotransferase family. HemL subfamily. Homodimer. The cofactor is pyridoxal 5'-phosphate.

It localises to the cytoplasm. It catalyses the reaction (S)-4-amino-5-oxopentanoate = 5-aminolevulinate. It functions in the pathway porphyrin-containing compound metabolism; protoporphyrin-IX biosynthesis; 5-aminolevulinate from L-glutamyl-tRNA(Glu): step 2/2. Its pathway is porphyrin-containing compound metabolism; chlorophyll biosynthesis. This is Glutamate-1-semialdehyde 2,1-aminomutase from Synechococcus sp. (strain JA-2-3B'a(2-13)) (Cyanobacteria bacterium Yellowstone B-Prime).